A 131-amino-acid chain; its full sequence is Cuticle protein 79, isoform B (131 aa).

3 repeat units span residues 37 to 40, 45 to 48, and 53 to 56.

Its function is as follows. Component of the cuticle of migratory locust which contains more than 100 different structural proteins. The polypeptide is Cuticle protein 79, isoform B (Locusta migratoria (Migratory locust)).